The sequence spans 252 residues: 5'-nucleotidase SurE (252 aa).

The a divalent metal cation site is built by D8, D9, S42, and N94.

The protein belongs to the SurE nucleotidase family. A divalent metal cation serves as cofactor.

Its subcellular location is the cytoplasm. The enzyme catalyses a ribonucleoside 5'-phosphate + H2O = a ribonucleoside + phosphate. Nucleotidase that shows phosphatase activity on nucleoside 5'-monophosphates. This Ehrlichia ruminantium (strain Gardel) protein is 5'-nucleotidase SurE.